Consider the following 432-residue polypeptide: N-acylneuraminate cytidylyltransferase (432 aa).

At methionine 1 the chain carries N-acetylmethionine. The segment at 1-38 is disordered; sequence MDALEKGAVTSGPAPRGRPSRGRPPKLQRSRGAGRGLE. A BC1 motif motif is present at residues 15 to 31; the sequence is PRGRPSRGRPPKLQRSR. The segment covering 18-29 has biased composition (basic residues); it reads RPSRGRPPKLQR. 2 positions are modified to omega-N-methylarginine: arginine 35 and arginine 50. Arginine 50, asparagine 60, arginine 109, serine 118, serine 120, and glutamine 141 together coordinate substrate. A BC2 motif motif is present at residues 198–204; that stretch reads KRPRRQD. Arginine 199 is a catalytic residue. A BC3 motif motif is present at residues 267 to 274; the sequence is KEKLKEIK.

Belongs to the CMP-NeuNAc synthase family. In terms of assembly, homotetramer; the active enzyme is formed by a dimer of dimers. Highly expressed in brain and heart, and at intermediate level muscle and liver.

The protein resides in the nucleus. It carries out the reaction an N-acylneuraminate + CTP = a CMP-N-acyl-beta-neuraminate + diphosphate. It participates in amino-sugar metabolism; N-acetylneuraminate metabolism. Functionally, catalyzes the activation of N-acetylneuraminic acid (NeuNAc) to cytidine 5'-monophosphate N-acetylneuraminic acid (CMP-NeuNAc), a substrate required for the addition of sialic acid. Has some activity toward NeuNAc, N-glycolylneuraminic acid (Neu5Gc) or 2-keto-3-deoxy-D-glycero-D-galacto-nononic acid (KDN). The polypeptide is N-acylneuraminate cytidylyltransferase (Cmas) (Mus musculus (Mouse)).